A 107-amino-acid polypeptide reads, in one-letter code: Nucleoid-associated protein CE0210 (107 aa).

This sequence belongs to the YbaB/EbfC family. As to quaternary structure, homodimer.

The protein resides in the cytoplasm. It is found in the nucleoid. Binds to DNA and alters its conformation. May be involved in regulation of gene expression, nucleoid organization and DNA protection. This Corynebacterium efficiens (strain DSM 44549 / YS-314 / AJ 12310 / JCM 11189 / NBRC 100395) protein is Nucleoid-associated protein CE0210.